We begin with the raw amino-acid sequence, 1040 residues long: Regulator of telomere elongation helicase 1 homolog (1040 aa).

In terms of domain architecture, Helicase ATP-binding spans 52-355 (RGINVEFPFE…KGLLLKLQEL (304 aa)). Residue 87–94 (SPTGTGKT) participates in ATP binding. The tract at residues 117 to 137 (RKNSAIPWSDSDEPLSQSGGG) is disordered. Cys-181, Cys-202, Cys-210, and Cys-246 together coordinate [4Fe-4S] cluster. The DEAH box motif lies at 289–292 (DEAH). The interval 926 to 949 (KVPESQGSASSSVLTAKGNGGGDK) is disordered. Over residues 930-939 (SQGSASSSVL) the composition is skewed to polar residues. A PIP-box; degenerate motif is present at residues 992-999 (QSIVQLFC).

The protein belongs to the helicase family. RAD3/XPD subfamily.

The protein resides in the nucleus. It catalyses the reaction ATP + H2O = ADP + phosphate + H(+). In terms of biological role, a probable ATP-dependent DNA helicase implicated in DNA replication, DNA repair and the maintenance of genomic stability. Acts as an anti-recombinase to counteract toxic recombination and limit crossover during meiosis. Regulates meiotic recombination and crossover homeostasis by physically dissociating strand invasion events and thereby promotes noncrossover repair by meiotic synthesis dependent strand annealing (SDSA) as well as disassembly of D loop recombination intermediates. Also plays a role in preserving the stability of 45S rDNA repeats. The chain is Regulator of telomere elongation helicase 1 homolog from Arabidopsis thaliana (Mouse-ear cress).